The following is a 248-amino-acid chain: ATP synthase subunit a, chloroplastic (248 aa).

5 helical membrane passes run 38 to 58 (QVLI…TLAV), 96 to 116 (VPFI…GALF), 135 to 155 (INTT…AGFT), 200 to 220 (LVVA…VMFL), and 221 to 241 (GLFT…AYIG).

It belongs to the ATPase A chain family. As to quaternary structure, F-type ATPases have 2 components, CF(1) - the catalytic core - and CF(0) - the membrane proton channel. CF(1) has five subunits: alpha(3), beta(3), gamma(1), delta(1), epsilon(1). CF(0) has four main subunits: a, b, b' and c.

Its subcellular location is the plastid. The protein localises to the chloroplast thylakoid membrane. Functionally, key component of the proton channel; it plays a direct role in the translocation of protons across the membrane. The chain is ATP synthase subunit a, chloroplastic from Cryptomeria japonica (Japanese cedar).